The sequence spans 459 residues: Argininosuccinate lyase (459 aa).

This sequence belongs to the lyase 1 family. Argininosuccinate lyase subfamily.

It localises to the cytoplasm. The catalysed reaction is 2-(N(omega)-L-arginino)succinate = fumarate + L-arginine. It functions in the pathway amino-acid biosynthesis; L-arginine biosynthesis; L-arginine from L-ornithine and carbamoyl phosphate: step 3/3. The chain is Argininosuccinate lyase from Prochlorococcus marinus subsp. pastoris (strain CCMP1986 / NIES-2087 / MED4).